A 270-amino-acid chain; its full sequence is MLASRALLAKQAAAMLVRQPACLMHHGGDWGNWGNTNIAVVFSGCGWWDGTDIHEAAYTMYHLSRNGARFQIFAPNQQQMHVMDHMKMQPSSSDNRNMMMESARFSHGQGMMQMNDLSKLDANSFDAVIFPGGHGIVKNMSTFSKDGKDCKLNNDVERVLKDFHRARKPIGLSSMAPLLACRVLPSLEVTMGYERDESSRWGRWPNTNMVQAVKSMGARHNTREPYEAYVDEKNKVISTPTFMWETDYHYHYIFDGIGNMVKHVMRMTAK.

In terms of tissue distribution, expressed specifically in the inner segments of cone photoreceptor cells of the retina (at protein level).

It is found in the mitochondrion. Functionally, plays a role in promoting mitochondrial enlargement in cone photoreceptor cells in a fusion-independent and ATP-dependent manner. This chain is ES1 protein, mitochondrial, found in Danio rerio (Zebrafish).